A 374-amino-acid polypeptide reads, in one-letter code: Patatin-2-Kuras 4 (374 aa).

The N-terminal stretch at 1-11 (MILATTSSTCA) is a signal peptide. The PNPLA domain maps to 20–217 (LSIDGGGIKG…TVGDPALLSL (198 aa)). The GXGXXG signature appears at 24–29 (GGGIKG). The short motif at 63–67 (GTSTG) is the GXSXG element. Ser-65 functions as the Nucleophile in the catalytic mechanism. Asn-103 is a glycosylation site (N-linked (GlcNAc...) asparagine). Asp-203 serves as the catalytic Proton acceptor. Residues 203–205 (DGG) carry the DGA/G motif. Positions 309-372 (ENALTGTTTE…DRKKLRANKA (64 aa)) form a coiled coil.

Belongs to the patatin family.

It localises to the vacuole. In terms of biological role, probable lipolytic acyl hydrolase (LAH), an activity which is thought to be involved in the response of tubers to pathogens. The sequence is that of Patatin-2-Kuras 4 (pat2-k4) from Solanum tuberosum (Potato).